The primary structure comprises 230 residues: Uracil phosphoribosyltransferase (230 aa).

A GTP-binding site is contributed by 38–42 (KGLVK). 5-phospho-alpha-D-ribose 1-diphosphate contacts are provided by residues Arg-87, Arg-112, and 140 to 148 (DPMIATGST). Uracil is bound by residues Ile-204 and 209 to 211 (GDA). 5-phospho-alpha-D-ribose 1-diphosphate is bound at residue Asp-210.

The protein belongs to the UPRTase family. It depends on Mg(2+) as a cofactor.

The catalysed reaction is UMP + diphosphate = 5-phospho-alpha-D-ribose 1-diphosphate + uracil. Its pathway is pyrimidine metabolism; UMP biosynthesis via salvage pathway; UMP from uracil: step 1/1. Its activity is regulated as follows. Allosterically activated by GTP. Catalyzes the conversion of uracil and 5-phospho-alpha-D-ribose 1-diphosphate (PRPP) to UMP and diphosphate. In Thermococcus kodakarensis (strain ATCC BAA-918 / JCM 12380 / KOD1) (Pyrococcus kodakaraensis (strain KOD1)), this protein is Uracil phosphoribosyltransferase.